Consider the following 159-residue polypeptide: E3 ubiquitin ligase complex SCF subunit sconC (159 aa).

The interaction with the F-box domain of F-box proteins stretch occupies residues 101 to 159 (ILAANYLDIKALLDVGCKTVANMIKGKSPEEIRKTFNIQNDFTPEEEDQIRRENEWAEE).

It belongs to the SKP1 family. In terms of assembly, component of the SCF (SKP1-CUL1-F-box protein) E3 ubiquitin ligase complexes.

It participates in protein modification; protein ubiquitination. In terms of biological role, essential component of the SCF (SKP1-CUL1-F-box protein) E3 ubiquitin ligase complexes, which mediate the ubiquitination and subsequent proteasomal degradation of target proteins. Controls sulfur metabolite repression, probably by mediating the inactivation or degradation of the metR transcription factor. This is E3 ubiquitin ligase complex SCF subunit sconC (sconC) from Aspergillus clavatus (strain ATCC 1007 / CBS 513.65 / DSM 816 / NCTC 3887 / NRRL 1 / QM 1276 / 107).